A 286-amino-acid polypeptide reads, in one-letter code: 4-diphosphocytidyl-2-C-methyl-D-erythritol kinase (286 aa).

The active site involves lysine 8. 92 to 102 (PVSAGLAGGST) serves as a coordination point for ATP. Aspartate 134 is a catalytic residue.

Belongs to the GHMP kinase family. IspE subfamily.

The catalysed reaction is 4-CDP-2-C-methyl-D-erythritol + ATP = 4-CDP-2-C-methyl-D-erythritol 2-phosphate + ADP + H(+). Its pathway is isoprenoid biosynthesis; isopentenyl diphosphate biosynthesis via DXP pathway; isopentenyl diphosphate from 1-deoxy-D-xylulose 5-phosphate: step 3/6. Its function is as follows. Catalyzes the phosphorylation of the position 2 hydroxy group of 4-diphosphocytidyl-2C-methyl-D-erythritol. The sequence is that of 4-diphosphocytidyl-2-C-methyl-D-erythritol kinase from Caldicellulosiruptor bescii (strain ATCC BAA-1888 / DSM 6725 / KCTC 15123 / Z-1320) (Anaerocellum thermophilum).